A 335-amino-acid polypeptide reads, in one-letter code: Glyceraldehyde-3-phosphate dehydrogenase, cytosolic (335 aa).

Residues 13-14 (RI), Asp-35, and Arg-80 each bind NAD(+). Residues 151 to 153 (SCT), Thr-182, 211 to 212 (TG), and Arg-234 contribute to the D-glyceraldehyde 3-phosphate site. The active-site Nucleophile is the Cys-152. Asn-316 is a binding site for NAD(+).

It belongs to the glyceraldehyde-3-phosphate dehydrogenase family. In terms of assembly, homotetramer.

The protein localises to the cytoplasm. The enzyme catalyses D-glyceraldehyde 3-phosphate + phosphate + NAD(+) = (2R)-3-phospho-glyceroyl phosphate + NADH + H(+). It participates in carbohydrate degradation; glycolysis; pyruvate from D-glyceraldehyde 3-phosphate: step 1/5. This Chondrus crispus (Carrageen Irish moss) protein is Glyceraldehyde-3-phosphate dehydrogenase, cytosolic (GAPC).